The primary structure comprises 217 residues: UPF0173 metal-dependent hydrolase MJ1163 (217 aa).

Belongs to the UPF0173 family.

The sequence is that of UPF0173 metal-dependent hydrolase MJ1163 from Methanocaldococcus jannaschii (strain ATCC 43067 / DSM 2661 / JAL-1 / JCM 10045 / NBRC 100440) (Methanococcus jannaschii).